The following is a 324-amino-acid chain: Cytochrome c biogenesis protein CcsA (324 aa).

The next 8 helical transmembrane spans lie at 15-35, 44-64, 71-91, 98-118, 143-163, 228-248, 255-275, and 289-309; these read FSIV…DEII, GMIA…IYSG, LYES…VPYF, LSTI…SGLL, MILG…LLVL, VISL…VWAN, WNWD…AVYL, and AIVA…VNLL.

This sequence belongs to the CcmF/CycK/Ccl1/NrfE/CcsA family. May interact with Ccs1.

It is found in the plastid. The protein localises to the chloroplast thylakoid membrane. Its function is as follows. Required during biogenesis of c-type cytochromes (cytochrome c6 and cytochrome f) at the step of heme attachment. The sequence is that of Cytochrome c biogenesis protein CcsA from Daucus carota (Wild carrot).